The primary structure comprises 403 residues: High affinity transport system protein p37 (403 aa).

The N-terminal stretch at 1-23 (MLKKLKNFILFSSIFSPIAFAIS) is a signal peptide. A lipid anchor (N-palmitoyl cysteine) is attached at Cys24. Residue Cys24 is the site of S-diacylglycerol cysteine attachment.

Its subcellular location is the cell membrane. P37 is part of a high-affinity transport system. The polypeptide is High affinity transport system protein p37 (p37) (Mesomycoplasma hyorhinis (Mycoplasma hyorhinis)).